Consider the following 414-residue polypeptide: Methanesulfonate monooxygenase hydroxylase subunit alpha (414 aa).

In terms of domain architecture, Rieske spans 44-163 (WVPFRHESEL…CEVKFGGFVW (120 aa)). Residues C86, H88, C115, and H118 each contribute to the [2Fe-2S] cluster site. Position 225 (H225) interacts with Fe cation.

It belongs to the bacterial ring-hydroxylating dioxygenase alpha subunit family. In terms of assembly, the MSA monooxygenase system consists of 4 proteins: the 2 subunits of the hydroxylase component (MsmA and MsmB), a ferredoxin (MsmC) and a ferredoxin reductase (MsmD). The hydroxylase component consists of a 3 alpha (MsmA) and 3 beta (MsmB) subunits. It depends on [2Fe-2S] cluster as a cofactor. The cofactor is Fe cation.

The protein resides in the cytoplasm. The enzyme catalyses methanesulfonate + NADH + O2 = sulfite + formaldehyde + NAD(+) + H2O. MSAMO is inhibited by metal chelators (such as bathophenanthroline, bathocuprione, neocuprione, alpha-alpha-dipyridil and sodium EDTA) and by sodium azide, sodium arsenate and potassium cyanide. Its function is as follows. Methanesulfonate monooxygenase (MSAMO) mediates the primary degradation of methanesulfonic acid (MSA) to produce formaldehyd and inorganic sulfite by initial hydroxylation of the carbon atom prior to spontaneous cleavage of the unstable hydroxymethanesulfonic acid. MSAMO has a restricted substrate range that includes only the short-chain aliphatic sulfonates (methane- to butanesulfonate) and excludes all larger molecules, such as arylsulfonates and aromatic sulfonates. All MSAMO components are required for enzyme activity. This is Methanesulfonate monooxygenase hydroxylase subunit alpha from Methylosulfonomonas methylovora.